A 101-amino-acid polypeptide reads, in one-letter code: Small ribosomal subunit protein uS14 (101 aa).

This sequence belongs to the universal ribosomal protein uS14 family. In terms of assembly, part of the 30S ribosomal subunit. Contacts proteins S3 and S10.

In terms of biological role, binds 16S rRNA, required for the assembly of 30S particles and may also be responsible for determining the conformation of the 16S rRNA at the A site. The chain is Small ribosomal subunit protein uS14 from Anaplasma phagocytophilum (strain HZ).